The sequence spans 281 residues: ATP synthase gamma chain (281 aa).

The protein belongs to the ATPase gamma chain family. As to quaternary structure, F-type ATPases have 2 components, CF(1) - the catalytic core - and CF(0) - the membrane proton channel. CF(1) has five subunits: alpha(3), beta(3), gamma(1), delta(1), epsilon(1). CF(0) has three main subunits: a, b and c.

The protein localises to the cell membrane. Its function is as follows. Produces ATP from ADP in the presence of a proton gradient across the membrane. The gamma chain is believed to be important in regulating ATPase activity and the flow of protons through the CF(0) complex. In Desulfitobacterium hafniense (strain DSM 10664 / DCB-2), this protein is ATP synthase gamma chain.